The chain runs to 84 residues: Small ribosomal subunit protein bS18 (84 aa).

This sequence belongs to the bacterial ribosomal protein bS18 family. In terms of assembly, part of the 30S ribosomal subunit. Forms a tight heterodimer with protein bS6.

In terms of biological role, binds as a heterodimer with protein bS6 to the central domain of the 16S rRNA, where it helps stabilize the platform of the 30S subunit. The chain is Small ribosomal subunit protein bS18 from Methylorubrum extorquens (strain CM4 / NCIMB 13688) (Methylobacterium extorquens).